The following is a 235-amino-acid chain: Purine nucleoside phosphorylase DeoD-type (235 aa).

His4 contributes to the a purine D-ribonucleoside binding site. Phosphate-binding positions include Gly20, Arg24, Arg43, and 87–90 (RVGT). A purine D-ribonucleoside contacts are provided by residues 179–181 (EME) and 203–204 (SD). Catalysis depends on Asp204, which acts as the Proton donor.

It belongs to the PNP/UDP phosphorylase family. As to quaternary structure, homohexamer; trimer of homodimers.

It carries out the reaction a purine D-ribonucleoside + phosphate = a purine nucleobase + alpha-D-ribose 1-phosphate. The enzyme catalyses a purine 2'-deoxy-D-ribonucleoside + phosphate = a purine nucleobase + 2-deoxy-alpha-D-ribose 1-phosphate. Functionally, catalyzes the reversible phosphorolytic breakdown of the N-glycosidic bond in the beta-(deoxy)ribonucleoside molecules, with the formation of the corresponding free purine bases and pentose-1-phosphate. In Clostridium perfringens (strain ATCC 13124 / DSM 756 / JCM 1290 / NCIMB 6125 / NCTC 8237 / Type A), this protein is Purine nucleoside phosphorylase DeoD-type.